The primary structure comprises 388 residues: Cystathionine gamma-synthase (388 aa).

A disordered region spans residues 1–24 (MSEDRTGHQGISGPATRAIHAGYR). Lys-208 bears the N6-(pyridoxal phosphate)lysine mark.

This sequence belongs to the trans-sulfuration enzymes family. In terms of assembly, homotetramer. The cofactor is pyridoxal 5'-phosphate.

It localises to the cytoplasm. The enzyme catalyses O-succinyl-L-homoserine + L-cysteine = L,L-cystathionine + succinate + H(+). Its function is as follows. Catalyzes the formation of L-cystathionine from O-succinyl-L-homoserine (OSHS) and L-cysteine, via a gamma-replacement reaction. In the absence of thiol, catalyzes gamma-elimination to form 2-oxobutanoate, succinate and ammonia. The polypeptide is Cystathionine gamma-synthase (metB) (Mycobacterium bovis (strain ATCC BAA-935 / AF2122/97)).